Here is a 147-residue protein sequence, read N- to C-terminus: UPF0735 ACT domain-containing protein Cthe_1377 (147 aa).

In terms of domain architecture, ACT spans 71–146 (TLFFTVEDYA…GVKRQEILAR (76 aa)).

This sequence belongs to the UPF0735 family.

The chain is UPF0735 ACT domain-containing protein Cthe_1377 from Acetivibrio thermocellus (strain ATCC 27405 / DSM 1237 / JCM 9322 / NBRC 103400 / NCIMB 10682 / NRRL B-4536 / VPI 7372) (Clostridium thermocellum).